The chain runs to 348 residues: Cell surface glycoprotein CD200 receptor 1 (348 aa).

The first 24 residues, 1–24 (MLCPWRTANLGLLLILTIFLVAEA), serve as a signal peptide directing secretion. The Extracellular portion of the chain corresponds to 29–265 (QPNNSLMLQT…PVPGAKKSAK (237 aa)). N-linked (GlcNAc...) asparagine glycosylation is found at N31, N60, N69, N116, N122, N185, N218, N233, and N247. Intrachain disulfides connect C83–C155 and C107–C123. One can recognise an Ig-like C2-type domain in the interval 160-251 (PDGNFHRGYH…SHLTGNKSLY (92 aa)). Cystine bridges form between C190–C239 and C209–C227. A helical membrane pass occupies residues 266–286 (LYIPYIILTIIILTIVGFIWL). The Cytoplasmic portion of the chain corresponds to 287-348 (LKVNGCRKYK…SEVDTDLHTL (62 aa)).

The protein belongs to the CD200R family. CD200 and CD200R1 interact via their respective N-terminal Ig-like domains. Interacts with Human herpesvirus 8 vOX2 protein. In terms of assembly, (Microbial infection) Interacts with human herpesvirus 8/HHV-8 protein vOX2/K14. Expressed in granulocytes, monocytes, most T-cells, neutrophils, basophils and a subset of NK, NKT and B-cells (at protein level). Expressed in bone marrow, lymph nodes, spleen, lung, liver, spinal cord, kidney. Expressed in monocyte-derived dendritic and mast cells.

It is found in the cell membrane. Its subcellular location is the secreted. Its function is as follows. Inhibitory receptor for the CD200/OX2 cell surface glycoprotein. Limits inflammation by inhibiting the expression of pro-inflammatory molecules including TNF-alpha, interferons, and inducible nitric oxide synthase (iNOS) in response to selected stimuli. Also binds to HHV-8 K14 viral CD200 homolog with identical affinity and kinetics as the host CD200. In Homo sapiens (Human), this protein is Cell surface glycoprotein CD200 receptor 1 (CD200R1).